The primary structure comprises 908 residues: Magnesium-transporting ATPase, P-type 1 (908 aa).

The span at 1–20 (MTDMNIENRKLNRPASENDK) shows a compositional bias: basic and acidic residues. The tract at residues 1 to 21 (MTDMNIENRKLNRPASENDKQ) is disordered. Over 1 to 80 (MTDMNIENRK…QVPPALIQLL (80 aa)) the chain is Cytoplasmic. A helical membrane pass occupies residues 81 to 101 (QAFNNPFIYVLMALAGVSFIT). The Extracellular portion of the chain corresponds to 102-113 (DYWLPLRRGEET). A helical membrane pass occupies residues 114–134 (DLTGVLIILTMVSLSGLLRFW). Topologically, residues 135–293 (QEFRTNRAAQ…QTAFDRGVNS (159 aa)) are cytoplasmic. Residues 294-314 (VSWLLIRFMLIMVPVVLLING) traverse the membrane as a helical segment. Residues 315–323 (FSKGDWVEA) lie on the Extracellular side of the membrane. Residues 324 to 341 (SLFALAVAVGLTPEMLPM) form a helical membrane-spanning segment. Residue Glu337 coordinates Mg(2+). The Cytoplasmic segment spans residues 342–704 (IVSSNLAKGA…IKGRETFGNI (363 aa)). Residue Asp379 is the 4-aspartylphosphate intermediate of the active site. Mg(2+) contacts are provided by Asp650, Asp654, and Asn718. Residues 705–724 (IKYLNMTASSNFGNVFSVLV) form a helical membrane-spanning segment. At 725–733 (ASAFIPFLP) the chain is on the extracellular side. The chain crosses the membrane as a helical span at residues 734–753 (MLAIHLLIQNLMYDISQLSL). Residues Asn743 and Asp747 each coordinate Mg(2+). Over 754-775 (PWDKMDKEFLRKPRKWDAKNIG) the chain is Cytoplasmic. A helical membrane pass occupies residues 776-799 (RFMLWIGPTSSIFDITTFALMWYV). The Extracellular portion of the chain corresponds to 800 to 808 (FAANNVEAQ). The chain crosses the membrane as a helical span at residues 809–827 (ALFQSGWFIEGLLSQTLVV). The Cytoplasmic portion of the chain corresponds to 828–840 (HMLRTQKIPFIQS). Residues 841-860 (RATLPVLLTTGLIMAIGIYI) form a helical membrane-spanning segment. Residues 861–875 (PFSPLGAMVGLEPLP) lie on the Extracellular side of the membrane. The helical transmembrane segment at 876–895 (LSYFPWLVATLLSYCLVAQG) threads the bilayer. Residues 896–908 (MKRFYIKRFGQWF) lie on the Cytoplasmic side of the membrane.

The protein belongs to the cation transport ATPase (P-type) (TC 3.A.3) family. Type IIIB subfamily.

It is found in the cell inner membrane. The enzyme catalyses Mg(2+)(out) + ATP + H2O = Mg(2+)(in) + ADP + phosphate + H(+). In terms of biological role, mediates magnesium influx to the cytosol. This Salmonella typhimurium (strain LT2 / SGSC1412 / ATCC 700720) protein is Magnesium-transporting ATPase, P-type 1 (mgtB).